The chain runs to 322 residues: HPr kinase/phosphorylase (322 aa).

Active-site residues include histidine 143 and lysine 164. ATP is bound at residue glycine 158–serine 165. A Mg(2+)-binding site is contributed by serine 165. Residue aspartate 182 is the Proton acceptor; for phosphorylation activity. Proton donor; for dephosphorylation activity of the active site. The interval methionine 206–asparagine 215 is important for the catalytic mechanism of both phosphorylation and dephosphorylation. Glutamate 207 contacts Mg(2+). Arginine 250 is a catalytic residue. The segment at proline 271–arginine 276 is important for the catalytic mechanism of dephosphorylation.

It belongs to the HPrK/P family. In terms of assembly, homohexamer. Mg(2+) serves as cofactor.

It carries out the reaction [HPr protein]-L-serine + ATP = [HPr protein]-O-phospho-L-serine + ADP + H(+). The catalysed reaction is [HPr protein]-O-phospho-L-serine + phosphate + H(+) = [HPr protein]-L-serine + diphosphate. Its function is as follows. Catalyzes the ATP- as well as the pyrophosphate-dependent phosphorylation of a specific serine residue in HPr, a phosphocarrier protein of the phosphoenolpyruvate-dependent sugar phosphotransferase system (PTS). HprK/P also catalyzes the pyrophosphate-producing, inorganic phosphate-dependent dephosphorylation (phosphorolysis) of seryl-phosphorylated HPr (P-Ser-HPr). The polypeptide is HPr kinase/phosphorylase (Leptospira biflexa serovar Patoc (strain Patoc 1 / Ames)).